The following is a 140-amino-acid chain: MKILNCFSLIGQCAKPILRTYTSPAADLLKLPRVDIKEGKLRYLLLSVYIHGETKHARTVVRGWNTDSHDDIYYKNVRAMEKLGLCTKCLGGGKMDNDESARKIKIHGSCKTFGAANHHKTKEILLSSSKYKNFNITVKK.

Arg42 is a binding site for substrate. The active-site Proton acceptor is the His69. Residue 110-112 participates in substrate binding; the sequence is CKT.

The protein belongs to the janus family.

JanA and janB regulate somatic sex differentiation. The sequence is that of Sex-regulated protein janus-B (janB) from Drosophila pseudoobscura pseudoobscura (Fruit fly).